Reading from the N-terminus, the 312-residue chain is 4-hydroxyproline 2-epimerase (312 aa).

Cys-88 functions as the Proton acceptor in the catalytic mechanism. Substrate is bound by residues 89 to 90, His-208, and Asp-234; that span reads GH. Cys-238 (proton donor) is an active-site residue. 239–240 serves as a coordination point for substrate; it reads GT.

The protein belongs to the proline racemase family.

It carries out the reaction trans-4-hydroxy-L-proline = cis-4-hydroxy-D-proline. Its function is as follows. Catalyzes the epimerization of trans-4-hydroxy-L-proline (t4LHyp) to cis-4-hydroxy-D-proline (c4DHyp). Is likely involved in a degradation pathway that converts t4LHyp to alpha-ketoglutarate. Can also catalyze the epimerization of trans-3-hydroxy-L-proline (t3LHyp) to cis-3-hydroxy-D-proline (c3DHyp), albeit with 500-fold lower efficiency. Displays no proline racemase activity. The sequence is that of 4-hydroxyproline 2-epimerase from Xanthomonas campestris pv. campestris (strain ATCC 33913 / DSM 3586 / NCPPB 528 / LMG 568 / P 25).